The following is a 132-amino-acid chain: ATP synthase epsilon chain (132 aa).

Belongs to the ATPase epsilon chain family. In terms of assembly, F-type ATPases have 2 components, CF(1) - the catalytic core - and CF(0) - the membrane proton channel. CF(1) has five subunits: alpha(3), beta(3), gamma(1), delta(1), epsilon(1). CF(0) has three main subunits: a, b and c.

Its subcellular location is the cell inner membrane. Its function is as follows. Produces ATP from ADP in the presence of a proton gradient across the membrane. The chain is ATP synthase epsilon chain from Anaeromyxobacter dehalogenans (strain 2CP-C).